Reading from the N-terminus, the 364-residue chain is GTPase Obg (364 aa).

The 161-residue stretch at 1-161 (MRFVDEVTIS…KYLRLELKIL (161 aa)) folds into the Obg domain. Positions 162–334 (ADAGIIGLPN…LVDAIWKLQS (173 aa)) constitute an OBG-type G domain. GTP is bound by residues 168-175 (GLPNAGKS), 193-197 (FTTLN), 217-220 (DIPG), 287-290 (NKID), and 315-317 (SAE). Mg(2+)-binding residues include Ser-175 and Thr-195.

The protein belongs to the TRAFAC class OBG-HflX-like GTPase superfamily. OBG GTPase family. Monomer. Requires Mg(2+) as cofactor.

Its subcellular location is the cytoplasm. In terms of biological role, an essential GTPase which binds GTP, GDP and possibly (p)ppGpp with moderate affinity, with high nucleotide exchange rates and a fairly low GTP hydrolysis rate. Plays a role in control of the cell cycle, stress response, ribosome biogenesis and in those bacteria that undergo differentiation, in morphogenesis control. The sequence is that of GTPase Obg from Lawsonia intracellularis (strain PHE/MN1-00).